We begin with the raw amino-acid sequence, 492 residues long: Anthranilate synthase component 1 (492 aa).

L-tryptophan contacts are provided by residues serine 48 and 273–275; that span reads PYM. 308–309 lines the chorismate pocket; that stretch reads GT. Residue glutamate 335 coordinates Mg(2+). Residues tyrosine 423, arginine 443, 457–459, and glycine 459 contribute to the chorismate site; that span reads GGG. Glutamate 472 contributes to the Mg(2+) binding site.

Belongs to the anthranilate synthase component I family. Heterotetramer consisting of two non-identical subunits: a beta subunit (TrpG) and a large alpha subunit (TrpE). The cofactor is Mg(2+).

It catalyses the reaction chorismate + L-glutamine = anthranilate + pyruvate + L-glutamate + H(+). Its pathway is amino-acid biosynthesis; L-tryptophan biosynthesis; L-tryptophan from chorismate: step 1/5. Its activity is regulated as follows. Feedback inhibited by tryptophan. Part of a heterotetrameric complex that catalyzes the two-step biosynthesis of anthranilate, an intermediate in the biosynthesis of L-tryptophan. In the first step, the glutamine-binding beta subunit (TrpG) of anthranilate synthase (AS) provides the glutamine amidotransferase activity which generates ammonia as a substrate that, along with chorismate, is used in the second step, catalyzed by the large alpha subunit of AS (TrpE) to produce anthranilate. In the absence of TrpG, TrpE can synthesize anthranilate directly from chorismate and high concentrations of ammonia. This is Anthranilate synthase component 1 from Pseudomonas aeruginosa (strain ATCC 15692 / DSM 22644 / CIP 104116 / JCM 14847 / LMG 12228 / 1C / PRS 101 / PAO1).